The primary structure comprises 418 residues: Gamma-glutamyl phosphate reductase (418 aa).

This sequence belongs to the gamma-glutamyl phosphate reductase family.

The protein localises to the cytoplasm. It carries out the reaction L-glutamate 5-semialdehyde + phosphate + NADP(+) = L-glutamyl 5-phosphate + NADPH + H(+). It functions in the pathway amino-acid biosynthesis; L-proline biosynthesis; L-glutamate 5-semialdehyde from L-glutamate: step 2/2. Catalyzes the NADPH-dependent reduction of L-glutamate 5-phosphate into L-glutamate 5-semialdehyde and phosphate. The product spontaneously undergoes cyclization to form 1-pyrroline-5-carboxylate. This Desulfosudis oleivorans (strain DSM 6200 / JCM 39069 / Hxd3) (Desulfococcus oleovorans) protein is Gamma-glutamyl phosphate reductase.